Consider the following 434-residue polypeptide: Serine hydroxymethyltransferase (434 aa).

(6S)-5,6,7,8-tetrahydrofolate-binding positions include leucine 132 and 136–138; that span reads GHL. Lysine 241 bears the N6-(pyridoxal phosphate)lysine mark.

The protein belongs to the SHMT family. As to quaternary structure, homodimer. Requires pyridoxal 5'-phosphate as cofactor.

The protein resides in the cytoplasm. It carries out the reaction (6R)-5,10-methylene-5,6,7,8-tetrahydrofolate + glycine + H2O = (6S)-5,6,7,8-tetrahydrofolate + L-serine. The protein operates within one-carbon metabolism; tetrahydrofolate interconversion. It participates in amino-acid biosynthesis; glycine biosynthesis; glycine from L-serine: step 1/1. Its function is as follows. Catalyzes the reversible interconversion of serine and glycine with tetrahydrofolate (THF) serving as the one-carbon carrier. This reaction serves as the major source of one-carbon groups required for the biosynthesis of purines, thymidylate, methionine, and other important biomolecules. Also exhibits THF-independent aldolase activity toward beta-hydroxyamino acids, producing glycine and aldehydes, via a retro-aldol mechanism. This Nitrobacter hamburgensis (strain DSM 10229 / NCIMB 13809 / X14) protein is Serine hydroxymethyltransferase.